The following is a 222-amino-acid chain: Kinetochore protein Spc25 (222 aa).

Positions 51-86 (RHQRKVGKLQKVLMERREELDKRVSFIEELDRELEA) form a coiled coil.

Belongs to the SPC25 family. In terms of assembly, component of the Ndc80 complex, which is composed of Ndc80, Nuf2 and Spc25.

The protein localises to the nucleus. It is found in the chromosome. It localises to the centromere. Its subcellular location is the kinetochore. Acts as a component of the essential kinetochore-associated Ndc80 complex, which is required for chromosome segregation and spindle checkpoint activity during meiosis and mitosis. Required for kinetochore integrity and the organization of stable microtubule binding sites in the outer plate of the kinetochore. Participates in SAC signaling that responds specifically to disruptions in spindle microtubule dynamics. The NDC80 complex synergistically enhances the affinity of the SKA1 complex for microtubules and may allow the NDC80 complex to track depolymerizing microtubules. The sequence is that of Kinetochore protein Spc25 from Drosophila simulans (Fruit fly).